The sequence spans 127 residues: Large ribosomal subunit protein eL8 (127 aa).

This sequence belongs to the eukaryotic ribosomal protein eL8 family. In terms of assembly, part of the 50S ribosomal subunit. Probably part of the RNase P complex.

It localises to the cytoplasm. In terms of biological role, multifunctional RNA-binding protein that recognizes the K-turn motif in ribosomal RNA, the RNA component of RNase P, box H/ACA, box C/D and box C'/D' sRNAs. The chain is Large ribosomal subunit protein eL8 from Aeropyrum pernix (strain ATCC 700893 / DSM 11879 / JCM 9820 / NBRC 100138 / K1).